The following is a 134-amino-acid chain: Fluoride-specific ion channel FluC 2 (134 aa).

4 helical membrane-spanning segments follow: residues 8–28, 40–60, 69–89, and 99–119; these read IVAIGIGGAIGTSFRFLLNTW, IENIVGSFLLGFLTSWFLVIV, LGVGLCGGFTTMSTLAADSVL, and LIYVAASLFGGIGFALLGYLL. Na(+) is bound by residues G75 and T78.

The protein belongs to the fluoride channel Fluc/FEX (TC 1.A.43) family.

The protein resides in the cell membrane. The enzyme catalyses fluoride(in) = fluoride(out). Na(+) is not transported, but it plays an essential structural role and its presence is essential for fluoride channel function. Its function is as follows. Fluoride-specific ion channel. Important for reducing fluoride concentration in the cell, thus reducing its toxicity. The polypeptide is Fluoride-specific ion channel FluC 2 (Halalkalibacterium halodurans (strain ATCC BAA-125 / DSM 18197 / FERM 7344 / JCM 9153 / C-125) (Bacillus halodurans)).